The primary structure comprises 326 residues: Adenosine receptor A1 (326 aa).

Over Met-1–Ala-10 the chain is Extracellular. The chain crosses the membrane as a helical span at residues Ala-11–Ala-33. Residues Val-34 to Cys-46 are Cytoplasmic-facing. The helical transmembrane segment at Phe-47–Ile-69 threads the bilayer. Residues Asn-70–Cys-80 lie on the Extracellular side of the membrane. A disulfide bond links Cys-80 and Cys-169. The helical transmembrane segment at Leu-81–Ala-102 threads the bilayer. Over Val-103–Arg-123 the chain is Cytoplasmic. A helical transmembrane segment spans residues Ala-124–Trp-146. Topologically, residues Asn-147–Ser-176 are extracellular. Residues Asn-148 and Asn-159 are each glycosylated (N-linked (GlcNAc...) asparagine). Residues Met-177–Met-201 form a helical membrane-spanning segment. Topologically, residues Glu-202 to Ser-235 are cytoplasmic. A helical membrane pass occupies residues Leu-236–Phe-259. The Extracellular segment spans residues Cys-260–Arg-267. The chain crosses the membrane as a helical span at residues Ile-268–Ile-292. At Gln-293–Asp-326 the chain is on the cytoplasmic side. A lipid anchor (S-palmitoyl cysteine) is attached at Cys-309.

The protein belongs to the G-protein coupled receptor 1 family.

The protein resides in the cell membrane. Functionally, receptor for adenosine. The activity of this receptor is mediated by G proteins which inhibit adenylyl cyclase. The protein is Adenosine receptor A1 (ADORA1) of Bos taurus (Bovine).